The chain runs to 388 residues: Succinate--CoA ligase [ADP-forming] subunit beta (388 aa).

An ATP-grasp domain is found at 9 to 244; that stretch reads KQLFAEYGLP…PSQDDPREAH (236 aa). ATP-binding positions include lysine 46, 53–55, glutamate 99, threonine 102, and glutamate 107; that span reads GRG. 2 residues coordinate Mg(2+): asparagine 199 and aspartate 213. Residues asparagine 264 and 321–323 each bind substrate; that span reads GIV.

Belongs to the succinate/malate CoA ligase beta subunit family. In terms of assembly, heterotetramer of two alpha and two beta subunits. It depends on Mg(2+) as a cofactor.

The catalysed reaction is succinate + ATP + CoA = succinyl-CoA + ADP + phosphate. The enzyme catalyses GTP + succinate + CoA = succinyl-CoA + GDP + phosphate. The protein operates within carbohydrate metabolism; tricarboxylic acid cycle; succinate from succinyl-CoA (ligase route): step 1/1. Succinyl-CoA synthetase functions in the citric acid cycle (TCA), coupling the hydrolysis of succinyl-CoA to the synthesis of either ATP or GTP and thus represents the only step of substrate-level phosphorylation in the TCA. The beta subunit provides nucleotide specificity of the enzyme and binds the substrate succinate, while the binding sites for coenzyme A and phosphate are found in the alpha subunit. The polypeptide is Succinate--CoA ligase [ADP-forming] subunit beta (Pseudomonas fluorescens (strain Pf0-1)).